A 210-amino-acid polypeptide reads, in one-letter code: Large ribosomal subunit protein uL3 (210 aa).

It belongs to the universal ribosomal protein uL3 family. Part of the 50S ribosomal subunit. Forms a cluster with proteins L14 and L19.

One of the primary rRNA binding proteins, it binds directly near the 3'-end of the 23S rRNA, where it nucleates assembly of the 50S subunit. This Caldicellulosiruptor bescii (strain ATCC BAA-1888 / DSM 6725 / KCTC 15123 / Z-1320) (Anaerocellum thermophilum) protein is Large ribosomal subunit protein uL3.